We begin with the raw amino-acid sequence, 249 residues long: Type III pantothenate kinase (249 aa).

Position 6–13 (6–13 (DCGNSFIK)) interacts with ATP. Substrate contacts are provided by residues Tyr-93 and 100–103 (GLDR). Catalysis depends on Asp-102, which acts as the Proton acceptor. Asp-122 contacts K(+). Thr-125 is a binding site for ATP. Thr-181 contacts substrate.

Belongs to the type III pantothenate kinase family. In terms of assembly, homodimer. It depends on NH4(+) as a cofactor. Requires K(+) as cofactor.

It is found in the cytoplasm. It catalyses the reaction (R)-pantothenate + ATP = (R)-4'-phosphopantothenate + ADP + H(+). Its pathway is cofactor biosynthesis; coenzyme A biosynthesis; CoA from (R)-pantothenate: step 1/5. Functionally, catalyzes the phosphorylation of pantothenate (Pan), the first step in CoA biosynthesis. In Pseudomonas fluorescens (strain Pf0-1), this protein is Type III pantothenate kinase.